Consider the following 98-residue polypeptide: Cystatin-A (98 aa).

Met1 carries the post-translational modification N-acetylmethionine. The Secondary area of contact motif lies at 46-50 (QVVAG).

This sequence belongs to the cystatin family. As to expression, expressed in the skin throughout the epidermis.

It localises to the cytoplasm. In terms of biological role, this is an intracellular thiol proteinase inhibitor. Has an important role in desmosome-mediated cell-cell adhesion in the lower levels of the epidermis. The protein is Cystatin-A (CSTA) of Homo sapiens (Human).